We begin with the raw amino-acid sequence, 192 residues long: Glycerol-3-phosphate acyltransferase (192 aa).

The next 5 helical transmembrane spans lie at 3–23 (ALFL…EVIA), 51–71 (YGVL…LIAV), 80–100 (VLTF…FFGF), 112–132 (VVFA…LGIF), and 149–169 (AFLF…AIVI).

The protein belongs to the PlsY family. In terms of assembly, probably interacts with PlsX.

The protein localises to the cell inner membrane. It carries out the reaction an acyl phosphate + sn-glycerol 3-phosphate = a 1-acyl-sn-glycero-3-phosphate + phosphate. It functions in the pathway lipid metabolism; phospholipid metabolism. Its function is as follows. Catalyzes the transfer of an acyl group from acyl-phosphate (acyl-PO(4)) to glycerol-3-phosphate (G3P) to form lysophosphatidic acid (LPA). This enzyme utilizes acyl-phosphate as fatty acyl donor, but not acyl-CoA or acyl-ACP. This is Glycerol-3-phosphate acyltransferase from Aquifex aeolicus (strain VF5).